Consider the following 1025-residue polypeptide: Multidrug resistance protein MdtC (1025 aa).

Helical transmembrane passes span 3 to 23 (FFAL…AITL), 333 to 353 (EVEQ…FLFL), 360 to 380 (IIPA…MYLC), 387 to 407 (LSLM…IVVL), 431 to 451 (VGFT…PLLL), 463 to 483 (FAVT…TLTP), 528 to 548 (LVGV…ISIP), 853 to 873 (VILI…LYES), 875 to 895 (VHPL…LLAL), 897 to 917 (LFNA…IGIV), 953 to 973 (PIMM…LSGG), and 984 to 1004 (ITIV…TPVV).

The protein belongs to the resistance-nodulation-cell division (RND) (TC 2.A.6) family. MdtC subfamily. Part of a tripartite efflux system composed of MdtA, MdtB and MdtC. MdtC forms a heteromultimer with MdtB.

The protein resides in the cell inner membrane. The MdtABC tripartite complex confers resistance against novobiocin and deoxycholate. The sequence is that of Multidrug resistance protein MdtC from Escherichia coli O8 (strain IAI1).